A 529-amino-acid chain; its full sequence is Bifunctional purine biosynthesis protein PurH (529 aa).

The MGS-like domain occupies 1–148; that stretch reads MQQRRPVRRA…KNHKDVAIVV (148 aa). The residue at position 287 (Lys-287) is an N6-acetyllysine.

Belongs to the PurH family.

The catalysed reaction is (6R)-10-formyltetrahydrofolate + 5-amino-1-(5-phospho-beta-D-ribosyl)imidazole-4-carboxamide = 5-formamido-1-(5-phospho-D-ribosyl)imidazole-4-carboxamide + (6S)-5,6,7,8-tetrahydrofolate. The enzyme catalyses IMP + H2O = 5-formamido-1-(5-phospho-D-ribosyl)imidazole-4-carboxamide. It functions in the pathway purine metabolism; IMP biosynthesis via de novo pathway; 5-formamido-1-(5-phospho-D-ribosyl)imidazole-4-carboxamide from 5-amino-1-(5-phospho-D-ribosyl)imidazole-4-carboxamide (10-formyl THF route): step 1/1. The protein operates within purine metabolism; IMP biosynthesis via de novo pathway; IMP from 5-formamido-1-(5-phospho-D-ribosyl)imidazole-4-carboxamide: step 1/1. This is Bifunctional purine biosynthesis protein PurH from Escherichia coli O8 (strain IAI1).